The primary structure comprises 150 residues: Non-specific lipid transfer protein GPI-anchored 7 (150 aa).

The signal sequence occupies residues 1 to 25 (MTKTMMIFAAAMTVMALLLVPTIEA). 4 disulfides stabilise this stretch: cysteine 29-cysteine 66, cysteine 36-cysteine 50, cysteine 51-cysteine 92, and cysteine 64-cysteine 101. Asparagine 41, asparagine 79, and asparagine 93 each carry an N-linked (GlcNAc...) asparagine glycan. The interval 103 to 125 (AKGAPSPKASLPPPAPAGNTKKD) is disordered. A lipid anchor (GPI-anchor amidated aspartate) is attached at aspartate 125. The propeptide at 126 to 150 (AGAGNKLAGYGVTTVILSLISSIFF) is removed in mature form.

This sequence belongs to the plant LTP family. In terms of tissue distribution, up-regulated in the epidermis of stems.

It is found in the cell membrane. In terms of biological role, probable lipid transfer protein. This Arabidopsis thaliana (Mouse-ear cress) protein is Non-specific lipid transfer protein GPI-anchored 7.